The following is a 466-amino-acid chain: uncharacterized protein (466 aa).

The protein belongs to the myoviridae tail sheath protein family.

This is an uncharacterized protein from Bacillus subtilis (strain 168).